A 248-amino-acid chain; its full sequence is tRNA pseudouridine synthase A (248 aa).

Asp-53 serves as the catalytic Nucleophile. Tyr-111 contacts substrate.

Belongs to the tRNA pseudouridine synthase TruA family. Homodimer.

The enzyme catalyses uridine(38/39/40) in tRNA = pseudouridine(38/39/40) in tRNA. Its function is as follows. Formation of pseudouridine at positions 38, 39 and 40 in the anticodon stem and loop of transfer RNAs. The chain is tRNA pseudouridine synthase A from Streptococcus thermophilus (strain CNRZ 1066).